A 1177-amino-acid polypeptide reads, in one-letter code: Zinc finger CCCH domain-containing protein 6 (1177 aa).

Residues 1–12 (MTDSEHAGHDRE) are compositionally biased toward basic and acidic residues. Disordered regions lie at residues 1–137 (MTDS…SKEY) and 179–206 (QESS…TEYR). Positions 13–31 (DGELEDGEIDDAGFEETQD) are enriched in acidic residues. Residues 27 to 73 (EETQDQEAKENEKQKNEKAYRKSRKKHKKEREKKKSKRRKHEKHKHN) are a coiled coil. Residues 32–46 (QEAKENEKQKNEKAY) are compositionally biased toward basic and acidic residues. Positions 47-73 (RKSRKKHKKEREKKKSKRRKHEKHKHN) are enriched in basic residues. Low complexity predominate over residues 179–188 (QESSGSSFSK). 3 C3H1-type zinc fingers span residues 271–297 (KGKQ…HDAE), 299–326 (EKKK…HSEF), and 327–350 (PCKF…HDDL). Residues 347–383 (HDDLTKETRKLLDKVLNADEELVNEDERELEELRKRG) adopt a coiled-coil conformation. 8 disordered regions span residues 383–416 (GITP…FETD), 446–587 (PPAF…ESMQ), 622–654 (QQQP…SASG), 670–767 (RYQE…KKPH), 780–826 (PKKL…SERE), 942–988 (EQSG…SSRS), 1043–1101 (DPRD…PVDG), and 1132–1162 (LLRP…DKPL). The segment covering 493–502 (HPGSPGHHPC) has biased composition (low complexity). Polar residues-rich tracts occupy residues 512–522 (ENPSLLPSSSE) and 564–587 (SSPA…ESMQ). Residues 713 to 728 (RTLQKQTGTLRNQQLP) are compositionally biased toward polar residues. A compositionally biased stretch (basic and acidic residues) spans 753-767 (PRLRTVPRQDIKKPH). The span at 955–967 (GDPRLQKNFDPRL) shows a compositional bias: basic and acidic residues. Composition is skewed to polar residues over residues 1050–1064 (LSAT…GENT) and 1077–1093 (KNQP…NTTA). Serine 1150 carries the phosphoserine modification.

This is Zinc finger CCCH domain-containing protein 6 (Zc3h6) from Mus musculus (Mouse).